We begin with the raw amino-acid sequence, 123 residues long: MPDASPSCAGQAAEDHALEHLRGQGLRLLARNWRCKGGELDLVMLDADTVVFVEVRYRLHAGFGGALGSIDGRKQKRLTLAANLFLQSEPRWADKPCRFDVVALQGQGHAGQPLQWLKNAFEC.

This sequence belongs to the UPF0102 family.

The chain is UPF0102 protein PSEEN4497 from Pseudomonas entomophila (strain L48).